Reading from the N-terminus, the 175-residue chain is Large ribosomal subunit protein uL10 (175 aa).

This sequence belongs to the universal ribosomal protein uL10 family. Part of the ribosomal stalk of the 50S ribosomal subunit. The N-terminus interacts with L11 and the large rRNA to form the base of the stalk. The C-terminus forms an elongated spine to which L12 dimers bind in a sequential fashion forming a multimeric L10(L12)X complex.

Functionally, forms part of the ribosomal stalk, playing a central role in the interaction of the ribosome with GTP-bound translation factors. The polypeptide is Large ribosomal subunit protein uL10 (Cyanothece sp. (strain PCC 7425 / ATCC 29141)).